The chain runs to 300 residues: ETS homologous factor (300 aa).

Positions 29–115 constitute a PNT domain; that stretch reads STCNVSSGFF…SNLQHLKWNG (87 aa). A disordered region spans residues 179–204; it reads LPIAESPDTKKEQDHPTKPHTKKHNP. Positions 185–195 are enriched in basic and acidic residues; the sequence is PDTKKEQDHPT. Residues 207-289 constitute a DNA-binding region (ETS); the sequence is THLWEFIRDI…DGRRLVYKFG (83 aa).

It belongs to the ETS family.

It localises to the nucleus. Its function is as follows. Transcriptional activator that may play a role in regulating epithelial cell differentiation and proliferation. May act as a repressor for a specific subset of ETS/AP-1-responsive genes, and as a modulator of the nuclear response to mitogen-activated protein kinase signaling cascades. Binds to DNA sequences containing the consensus nucleotide core sequence GGAA. Involved in regulation of TNFRSF10B/DR5 expression through Ets-binding sequences on the TNFRSF10B/DR5 promoter. The protein is ETS homologous factor (EHF) of Bos taurus (Bovine).